The chain runs to 243 residues: Geranylgeranylglyceryl phosphate synthase (243 aa).

2 residues coordinate Mg(2+): D22 and S51. Residues 169-175 (YLEAGSG), 200-201 (GG), and 222-223 (GT) each bind sn-glycerol 1-phosphate.

Belongs to the GGGP/HepGP synthase family. Group II subfamily. Mg(2+) is required as a cofactor.

The protein resides in the cytoplasm. It carries out the reaction sn-glycerol 1-phosphate + (2E,6E,10E)-geranylgeranyl diphosphate = sn-3-O-(geranylgeranyl)glycerol 1-phosphate + diphosphate. The protein operates within membrane lipid metabolism; glycerophospholipid metabolism. Prenyltransferase that catalyzes the transfer of the geranylgeranyl moiety of geranylgeranyl diphosphate (GGPP) to the C3 hydroxyl of sn-glycerol-1-phosphate (G1P). This reaction is the first ether-bond-formation step in the biosynthesis of archaeal membrane lipids. This Methanosphaera stadtmanae (strain ATCC 43021 / DSM 3091 / JCM 11832 / MCB-3) protein is Geranylgeranylglyceryl phosphate synthase.